Reading from the N-terminus, the 2081-residue chain is Non-reducing polyketide synthase terA (2081 aa).

Residues 85-190 (TLTLAFRIGV…ISLDIFAPFH (106 aa)) form an N-terminal acylcarrier protein transacylase (SAT) domain (SAT) region. The 434-residue stretch at 316–749 (AQKIAIVGMA…GGNTGLLLED (434 aa)) folds into the Ketosynthase family 3 (KS3) domain. Active-site for beta-ketoacyl synthase activity residues include C488, H623, and H667. The segment at 849-1147 (LFTGQGSHYT…LTLPSLRKQE (299 aa)) is malonyl-CoA:ACP transacylase (MAT) domain. The interval 1230–1364 (QKVIKEDFGQ…CHVEYGDIKT (135 aa)) is N-terminal hotdog fold. One can recognise a PKS/mFAS DH domain in the interval 1230-1539 (QKVIKEDFGQ…FKAIPRAVIN (310 aa)). The product template (PT) domain stretch occupies residues 1259–1536 (VTGHLVNGSA…GVKFKAIPRA (278 aa)). H1262 acts as the Proton acceptor; for dehydratase activity in catalysis. Residues 1392–1539 (YQKLDRKAAY…FKAIPRAVIN (148 aa)) form a C-terminal hotdog fold region. D1452 functions as the Proton donor; for dehydratase activity in the catalytic mechanism. Residues 1549-1578 (KALEKSAPRQNPKATATKTTQKPQAPVPVP) are disordered. Residues 1558–1572 (QNPKATATKTTQKPQ) are compositionally biased toward low complexity. The 79-residue stretch at 1580 to 1658 (KQNKAIIDDF…QVKELILKLA (79 aa)) folds into the Carrier 1 domain. Residue S1617 is modified to O-(pantetheine 4'-phosphoryl)serine. The interval 1659–1700 (GSSSDENTTDTPDEEEDPATADADNTEMIRENPLESVSPNVS) is disordered. A compositionally biased stretch (acidic residues) spans 1665–1677 (NTTDTPDEEEDPA). The Carrier 2 domain occupies 1699 to 1776 (VSSSEAMDGF…QARLAIASLM (78 aa)). S1736 carries the post-translational modification O-(pantetheine 4'-phosphoryl)serine. The tract at residues 1783–1809 (GATTPYSGSDDAKSSTSSLTAGSVLTP) is disordered. The thioesterase (TE) domain stretch occupies residues 1840-2070 (TLFLLPDGSG…TMMREPKVNQ (231 aa)).

It carries out the reaction 3 malonyl-CoA + acetyl-CoA + 2 H(+) = orsellinate + 3 CO2 + 4 CoA. It participates in secondary metabolite biosynthesis. Non-reducing polyketide synthase; part of the gene cluster that mediates the biosynthesis of terrein, a fungal metabolite with ecological, antimicrobial, antiproliferative, and antioxidative activities. The first step in the pathway is performed by the polyketide synthase terA that produces 4-hydroxy-6-methylpyranon (4-HMP), orsellinic acid (OA), and 2,3-dehydro-6-hydroxymellein (2,3-dehydro-6-HM) by condensing acetyl-CoA with two, three, or four malonyl-CoA units, respectively. 4-HMP and OA are not pathway intermediates, but are rather shunt or side products. 2,3-dehydro-6-HM is further converted to 6-hydroxymellein (6-HM) by the 6-hydroxymellein synthase terB. The monooxygenases terC and terD, the multicopper oxidase terE and the Kelch-like protein terF are then involved in the transformation of 6-HM to terrein. Even if they are co-regulated with the other terrein cluster genes, terH and terI seem to be dispensable for terrein production; whereas one or both of the 2 transporters terG and terJ are probably required for efficient secretion of metabolites. This chain is Non-reducing polyketide synthase terA, found in Aspergillus terreus (strain NIH 2624 / FGSC A1156).